Here is a 131-residue protein sequence, read N- to C-terminus: Fumarate reductase subunit C (131 aa).

3 consecutive transmembrane segments (helical) span residues 30 to 50, 57 to 77, and 109 to 129; these read EGTA…LFAL, WMGF…LITL, and IIKG…YVAL.

The protein belongs to the FrdC family. In terms of assembly, part of an enzyme complex containing four subunits: a flavoprotein (FrdA), an iron-sulfur protein (FrdB), and two hydrophobic anchor proteins (FrdC and FrdD).

The protein localises to the cell inner membrane. Two distinct, membrane-bound, FAD-containing enzymes are responsible for the catalysis of fumarate and succinate interconversion; fumarate reductase is used in anaerobic growth, and succinate dehydrogenase is used in aerobic growth. Anchors the catalytic components of the fumarate reductase complex to the cell inner membrane, binds quinones. In Salmonella heidelberg (strain SL476), this protein is Fumarate reductase subunit C.